Reading from the N-terminus, the 137-residue chain is Small ribosomal subunit protein bS6 (137 aa).

Positions 104-137 (SLVNKANNKPEPKPTKAKKEDVAPEAKEQAQTEA) are disordered. Basic and acidic residues predominate over residues 111–137 (NKPEPKPTKAKKEDVAPEAKEQAQTEA).

This sequence belongs to the bacterial ribosomal protein bS6 family.

Binds together with bS18 to 16S ribosomal RNA. The polypeptide is Small ribosomal subunit protein bS6 (Helicobacter hepaticus (strain ATCC 51449 / 3B1)).